We begin with the raw amino-acid sequence, 380 residues long: Cytochrome b (380 aa).

Transmembrane regions (helical) follow at residues 34–54 (FGSLLGICLMTQILTGLLLAM), 78–99 (WLIRNLHANGASFFFICIYLHI), 114–134 (WNTGIILLLTLMATAFVGYVL), and 179–199 (FFALHFLLPFAIAGLTLIHLT). The heme b site is built by His84 and His98. Heme b-binding residues include His183 and His197. An a ubiquinone-binding site is contributed by His202. The next 4 membrane-spanning stretches (helical) occupy residues 227–247 (LKDILGFTLMFLPLTSLALFS), 289–309 (LGGVLALAASVLVLFLSPFLH), 321–341 (LSQLLFWILVTNLFILTWVGS), and 348–368 (FIIIGQLASVTYFTILLILFP).

The protein belongs to the cytochrome b family. As to quaternary structure, the cytochrome bc1 complex contains 11 subunits: 3 respiratory subunits (MT-CYB, CYC1 and UQCRFS1), 2 core proteins (UQCRC1 and UQCRC2) and 6 low-molecular weight proteins (UQCRH/QCR6, UQCRB/QCR7, UQCRQ/QCR8, UQCR10/QCR9, UQCR11/QCR10 and a cleavage product of UQCRFS1). This cytochrome bc1 complex then forms a dimer. Heme b serves as cofactor.

It is found in the mitochondrion inner membrane. In terms of biological role, component of the ubiquinol-cytochrome c reductase complex (complex III or cytochrome b-c1 complex) that is part of the mitochondrial respiratory chain. The b-c1 complex mediates electron transfer from ubiquinol to cytochrome c. Contributes to the generation of a proton gradient across the mitochondrial membrane that is then used for ATP synthesis. This chain is Cytochrome b (MT-CYB), found in Thalassoica antarctica (Antarctic petrel).